A 439-amino-acid polypeptide reads, in one-letter code: Methylenetetrahydrofolate--tRNA-(uracil-5-)-methyltransferase TrmFO (439 aa).

8 to 13 (GAGLAG) contributes to the FAD binding site.

This sequence belongs to the MnmG family. TrmFO subfamily. It depends on FAD as a cofactor.

The protein localises to the cytoplasm. It carries out the reaction uridine(54) in tRNA + (6R)-5,10-methylene-5,6,7,8-tetrahydrofolate + NADH + H(+) = 5-methyluridine(54) in tRNA + (6S)-5,6,7,8-tetrahydrofolate + NAD(+). The enzyme catalyses uridine(54) in tRNA + (6R)-5,10-methylene-5,6,7,8-tetrahydrofolate + NADPH + H(+) = 5-methyluridine(54) in tRNA + (6S)-5,6,7,8-tetrahydrofolate + NADP(+). In terms of biological role, catalyzes the folate-dependent formation of 5-methyl-uridine at position 54 (M-5-U54) in all tRNAs. The chain is Methylenetetrahydrofolate--tRNA-(uracil-5-)-methyltransferase TrmFO from Magnetococcus marinus (strain ATCC BAA-1437 / JCM 17883 / MC-1).